The sequence spans 156 residues: Small ribosomal subunit protein uS7 (156 aa).

It belongs to the universal ribosomal protein uS7 family. As to quaternary structure, part of the 30S ribosomal subunit. Contacts proteins S9 and S11.

Functionally, one of the primary rRNA binding proteins, it binds directly to 16S rRNA where it nucleates assembly of the head domain of the 30S subunit. Is located at the subunit interface close to the decoding center, probably blocks exit of the E-site tRNA. This is Small ribosomal subunit protein uS7 from Shewanella frigidimarina (strain NCIMB 400).